We begin with the raw amino-acid sequence, 687 residues long: DNA ligase (687 aa).

Residues 34–38, 83–84, and Glu-117 contribute to the NAD(+) site; these read DAEYD and SL. Catalysis depends on Lys-119, which acts as the N6-AMP-lysine intermediate. NAD(+) contacts are provided by Arg-140, Glu-182, Lys-298, and Lys-322. Zn(2+)-binding residues include Cys-416, Cys-419, Cys-434, and Cys-439. The BRCT domain maps to 609–687; the sequence is EARGPFAGKT…EEEFVRLLKE (79 aa).

It belongs to the NAD-dependent DNA ligase family. LigA subfamily. The cofactor is Mg(2+). It depends on Mn(2+) as a cofactor.

It catalyses the reaction NAD(+) + (deoxyribonucleotide)n-3'-hydroxyl + 5'-phospho-(deoxyribonucleotide)m = (deoxyribonucleotide)n+m + AMP + beta-nicotinamide D-nucleotide.. DNA ligase that catalyzes the formation of phosphodiester linkages between 5'-phosphoryl and 3'-hydroxyl groups in double-stranded DNA using NAD as a coenzyme and as the energy source for the reaction. It is essential for DNA replication and repair of damaged DNA. The protein is DNA ligase of Anaeromyxobacter dehalogenans (strain 2CP-1 / ATCC BAA-258).